The following is a 179-amino-acid chain: Tegument protein UL55 homolog (179 aa).

The protein belongs to the alphaherpesvirinae HHV-1 UL55 family.

It is found in the virion tegument. The protein localises to the host nucleus matrix. The polypeptide is Tegument protein UL55 homolog (Homo sapiens (Human)).